Here is a 423-residue protein sequence, read N- to C-terminus: Glutamate-1-semialdehyde 2,1-aminomutase (423 aa).

Residue Lys-266 is modified to N6-(pyridoxal phosphate)lysine.

Belongs to the class-III pyridoxal-phosphate-dependent aminotransferase family. HemL subfamily. Homodimer. Pyridoxal 5'-phosphate serves as cofactor.

It is found in the cytoplasm. The catalysed reaction is (S)-4-amino-5-oxopentanoate = 5-aminolevulinate. It functions in the pathway porphyrin-containing compound metabolism; protoporphyrin-IX biosynthesis; 5-aminolevulinate from L-glutamyl-tRNA(Glu): step 2/2. In Nitratidesulfovibrio vulgaris (strain ATCC 29579 / DSM 644 / CCUG 34227 / NCIMB 8303 / VKM B-1760 / Hildenborough) (Desulfovibrio vulgaris), this protein is Glutamate-1-semialdehyde 2,1-aminomutase.